The primary structure comprises 237 residues: Uridylate kinase (237 aa).

11 to 14 (KLSG) contacts ATP. A UMP-binding site is contributed by Gly-53. ATP-binding residues include Gly-54 and Arg-58. UMP contacts are provided by residues Asp-73 and 134–141 (TGNPFFTT). Residues Thr-161, Tyr-167, and Asp-170 each contribute to the ATP site.

Belongs to the UMP kinase family. As to quaternary structure, homohexamer.

The protein resides in the cytoplasm. The enzyme catalyses UMP + ATP = UDP + ADP. It participates in pyrimidine metabolism; CTP biosynthesis via de novo pathway; UDP from UMP (UMPK route): step 1/1. With respect to regulation, inhibited by UTP. Its function is as follows. Catalyzes the reversible phosphorylation of UMP to UDP. This is Uridylate kinase from Burkholderia ambifaria (strain ATCC BAA-244 / DSM 16087 / CCUG 44356 / LMG 19182 / AMMD) (Burkholderia cepacia (strain AMMD)).